The following is a 335-amino-acid chain: Protein FATTY ACID EXPORT 3, chloroplastic (335 aa).

The transit peptide at 1-72 (MMSIPMELMS…PEVLLNRSVV (72 aa)) directs the protein to the chloroplast. The interval 82–101 (GESGVEVGKEKSDIDVEDDT) is disordered. Residues 88 to 101 (VGKEKSDIDVEDDT) show a composition bias toward basic and acidic residues. Residues 101–160 (TSKEAWKQTLESFKEQVSKMQSVSSEAYSVNSQKAMTVLKETSEQLRIQAEKAKEELGTK) adopt a coiled-coil conformation. 3 consecutive transmembrane segments (helical) span residues 205-225 (FHVG…NFMV), 228-248 (SIPA…LSLA), and 286-306 (STFL…FYLY). The interval 316–335 (PTLEDGGEDESSDGFVRSEG) is disordered.

This sequence belongs to the TMEM14 family.

Its subcellular location is the plastid. The protein localises to the chloroplast membrane. In terms of biological role, may be involved in free fatty acids export from the plastids. The sequence is that of Protein FATTY ACID EXPORT 3, chloroplastic from Arabidopsis thaliana (Mouse-ear cress).